We begin with the raw amino-acid sequence, 315 residues long: Glutathione synthetase (315 aa).

The ATP-grasp domain occupies 125–310; it reads KLFTAWFSDL…ITGMLMDAIE (186 aa). N-beta-linked (GlcNAc) arginine glycosylation is present at R256. The Mg(2+) site is built by E281 and N283.

Belongs to the prokaryotic GSH synthase family. It depends on Mg(2+) as a cofactor. Requires Mn(2+) as cofactor. Glycosylation at Arg-256 by NleB enhances the glutathione synthetase activity, leading to an increase in glutathione production. Glycosylation may promote C.rodentium survival in oxidative stress conditions.

It carries out the reaction gamma-L-glutamyl-L-cysteine + glycine + ATP = glutathione + ADP + phosphate + H(+). It functions in the pathway sulfur metabolism; glutathione biosynthesis; glutathione from L-cysteine and L-glutamate: step 2/2. The polypeptide is Glutathione synthetase (Citrobacter rodentium).